A 78-amino-acid chain; its full sequence is Small ribosomal subunit protein bS18 (78 aa).

It belongs to the bacterial ribosomal protein bS18 family. Part of the 30S ribosomal subunit. Forms a tight heterodimer with protein bS6.

Its function is as follows. Binds as a heterodimer with protein bS6 to the central domain of the 16S rRNA, where it helps stabilize the platform of the 30S subunit. The chain is Small ribosomal subunit protein bS18 from Lactobacillus johnsonii (strain CNCM I-12250 / La1 / NCC 533).